The chain runs to 839 residues: Taste receptor type 1 member 2 (839 aa).

The first 19 residues, 1–19 (MGPRATTICSLFFLLWVLA), serve as a signal peptide directing secretion. Over 20-566 (EPAENSDFYL…AFLEWHEAPT (547 aa)) the chain is Extracellular. N-linked (GlcNAc...) asparagine glycans are attached at residues N84, N248, N292, N312, N368, N428, N487, and N527. A helical transmembrane segment spans residues 567-587 (IAVALLAALGFLSTLAILVIF). At 588-602 (WRHFQTPMVRSAGGP) the chain is on the cytoplasmic side. The helical transmembrane segment at 603–623 (MCFLMLTLLLVAYMVVPVYVG) threads the bilayer. The Extracellular segment spans residues 624–635 (PPKVSTCLCRQA). A helical transmembrane segment spans residues 636–656 (LFPLCFTICISCIAVRSFQII). Over 657–681 (CAFKMASRFPRAYSYWVRYQGPYVS) the chain is Cytoplasmic. Residues 682–702 (MAFITVLKMVIVVIGMLATGL) traverse the membrane as a helical segment. The Extracellular portion of the chain corresponds to 703–727 (NPTTRTDPDDPKIMIVSCNPNYRNS). A helical membrane pass occupies residues 728–748 (LLFNTSLDLLLSVVGFSFANM). Residues 749-760 (GKELPTNYNEAK) lie on the Cytoplasmic side of the membrane. A helical transmembrane segment spans residues 761–781 (FITLSMTFYFTSSISLCTFMS). Over 782–784 (AYS) the chain is Extracellular. A helical membrane pass occupies residues 785 to 805 (GVLVTIVDLLVTVLNLLAISL). Residues 806 to 839 (GYFGPKCYMILFYPERNTPAYFNSVIQGYTMTRD) are Cytoplasmic-facing.

Belongs to the G-protein coupled receptor 3 family. TAS1R subfamily. In terms of assembly, forms heterodimers with TAS1R3.

Its subcellular location is the cell membrane. Functionally, putative taste receptor. TAS1R2/TAS1R3 recognizes diverse natural and synthetic sweeteners. The protein is Taste receptor type 1 member 2 (TAS1R2) of Pongo pygmaeus (Bornean orangutan).